The sequence spans 211 residues: Pyridoxine/pyridoxamine 5'-phosphate oxidase (211 aa).

Residues 7–10 (RREY) and K65 contribute to the substrate site. Residues 60–65 (RIVLLK), 75–76 (YT), R81, K82, and Q104 contribute to the FMN site. Substrate-binding residues include Y122, R126, and S130. FMN-binding positions include 139–140 (QS) and W184. 190–192 (RLH) contacts substrate. Residue R194 participates in FMN binding.

This sequence belongs to the pyridoxamine 5'-phosphate oxidase family. In terms of assembly, homodimer. It depends on FMN as a cofactor.

It catalyses the reaction pyridoxamine 5'-phosphate + O2 + H2O = pyridoxal 5'-phosphate + H2O2 + NH4(+). The enzyme catalyses pyridoxine 5'-phosphate + O2 = pyridoxal 5'-phosphate + H2O2. It participates in cofactor metabolism; pyridoxal 5'-phosphate salvage; pyridoxal 5'-phosphate from pyridoxamine 5'-phosphate: step 1/1. It functions in the pathway cofactor metabolism; pyridoxal 5'-phosphate salvage; pyridoxal 5'-phosphate from pyridoxine 5'-phosphate: step 1/1. Catalyzes the oxidation of either pyridoxine 5'-phosphate (PNP) or pyridoxamine 5'-phosphate (PMP) into pyridoxal 5'-phosphate (PLP). The protein is Pyridoxine/pyridoxamine 5'-phosphate oxidase of Vibrio vulnificus (strain CMCP6).